The primary structure comprises 273 residues: Ribosomal RNA small subunit methyltransferase A (273 aa).

S-adenosyl-L-methionine-binding residues include Asn-19, Leu-21, Gly-46, Glu-71, Asp-94, and Asn-117.

The protein belongs to the class I-like SAM-binding methyltransferase superfamily. rRNA adenine N(6)-methyltransferase family. RsmA subfamily.

The protein resides in the cytoplasm. It catalyses the reaction adenosine(1518)/adenosine(1519) in 16S rRNA + 4 S-adenosyl-L-methionine = N(6)-dimethyladenosine(1518)/N(6)-dimethyladenosine(1519) in 16S rRNA + 4 S-adenosyl-L-homocysteine + 4 H(+). Specifically dimethylates two adjacent adenosines (A1518 and A1519) in the loop of a conserved hairpin near the 3'-end of 16S rRNA in the 30S particle. May play a critical role in biogenesis of 30S subunits. This Burkholderia ambifaria (strain MC40-6) protein is Ribosomal RNA small subunit methyltransferase A.